A 500-amino-acid chain; its full sequence is Cytochrome P450 monooxygenase 103 (500 aa).

Transmembrane regions (helical) follow at residues 1 to 21 (MAST…YLLR) and 26 to 46 (PLYA…IGAL). An N-linked (GlcNAc...) asparagine glycan is attached at asparagine 374. A heme-binding site is contributed by cysteine 441.

The protein belongs to the cytochrome P450 family. Heme is required as a cofactor.

The protein resides in the membrane. It participates in secondary metabolite biosynthesis. Its function is as follows. Cytochrome P450 monooxygenase that is able to use testosterone as a substrate for oxidation. This Postia placenta (strain ATCC 44394 / Madison 698-R) (Brown rot fungus) protein is Cytochrome P450 monooxygenase 103.